The sequence spans 577 residues: Proline--tRNA ligase (577 aa).

The protein belongs to the class-II aminoacyl-tRNA synthetase family. ProS type 1 subfamily. As to quaternary structure, homodimer.

The protein resides in the cytoplasm. The catalysed reaction is tRNA(Pro) + L-proline + ATP = L-prolyl-tRNA(Pro) + AMP + diphosphate. Its function is as follows. Catalyzes the attachment of proline to tRNA(Pro) in a two-step reaction: proline is first activated by ATP to form Pro-AMP and then transferred to the acceptor end of tRNA(Pro). As ProRS can inadvertently accommodate and process non-cognate amino acids such as alanine and cysteine, to avoid such errors it has two additional distinct editing activities against alanine. One activity is designated as 'pretransfer' editing and involves the tRNA(Pro)-independent hydrolysis of activated Ala-AMP. The other activity is designated 'posttransfer' editing and involves deacylation of mischarged Ala-tRNA(Pro). The misacylated Cys-tRNA(Pro) is not edited by ProRS. The chain is Proline--tRNA ligase from Chlamydia abortus (strain DSM 27085 / S26/3) (Chlamydophila abortus).